The sequence spans 33 residues: Suppressor protein HFN40 (33 aa).

Its function is as follows. Suppresses expansion of husk leaf blades. The protein is Suppressor protein HFN40 of Zea mays (Maize).